The primary structure comprises 403 residues: Acetate kinase (403 aa).

Residue asparagine 8 participates in Mg(2+) binding. ATP is bound at residue lysine 15. Residue arginine 90 coordinates substrate. Aspartate 147 serves as the catalytic Proton donor/acceptor. Residues 207 to 211 (HLGSG), 282 to 284 (DLR), and 330 to 334 (GVGEN) each bind ATP. A Mg(2+)-binding site is contributed by glutamate 384.

The protein belongs to the acetokinase family. Homodimer. Requires Mg(2+) as cofactor. Mn(2+) is required as a cofactor.

It localises to the cytoplasm. The enzyme catalyses acetate + ATP = acetyl phosphate + ADP. It functions in the pathway metabolic intermediate biosynthesis; acetyl-CoA biosynthesis; acetyl-CoA from acetate: step 1/2. Functionally, catalyzes the formation of acetyl phosphate from acetate and ATP. Can also catalyze the reverse reaction. In Exiguobacterium sibiricum (strain DSM 17290 / CCUG 55495 / CIP 109462 / JCM 13490 / 255-15), this protein is Acetate kinase.